The sequence spans 58 residues: Sperm protamine P2 (58 aa).

The disordered stretch occupies residues 1–58; sequence RRRRRRGKGRGKKRKGKGKKRGKGRRRGSKGRKKKKGKGKKRKRRRRRRRKGSKGKGK.

In terms of tissue distribution, gonads.

The protein resides in the nucleus. It is found in the chromosome. Its function is as follows. Protamines substitute for histones in the chromatin of sperm during the haploid phase of spermatogenesis. They compact sperm DNA into a highly condensed, stable and inactive complex. The sequence is that of Sperm protamine P2 from Bolinus brandaris (Purple dye murex).